A 317-amino-acid chain; its full sequence is Probable RuBisCO transcriptional regulator (317 aa).

The HTH lysR-type domain occupies 6-63 (FTLDQLRILKAIAKEGSFKKAANSLYVSQPAISLQIQNLERQLNVALFERGNKKATLT). A DNA-binding region (H-T-H motif) is located at residues 23-42 (FKKAANSLYVSQPAISLQIQ).

This sequence belongs to the LysR transcriptional regulatory family.

It is found in the plastid. The protein resides in the chloroplast. In terms of biological role, trans-acting transcriptional regulator of RuBisCO genes (rbcL and rbcS) expression. The chain is Probable RuBisCO transcriptional regulator (rbcR) from Porphyra purpurea (Red seaweed).